A 982-amino-acid chain; its full sequence is Zinc finger and BTB domain-containing protein 4 (982 aa).

In terms of domain architecture, BTB spans 30-131 (CDVTLIAGDT…IYSARLALPG (102 aa)). K40 participates in a covalent cross-link: Glycyl lysine isopeptide (Lys-Gly) (interchain with G-Cter in SUMO2). Positions 71–103 (TGGSAPSPATTTAASSSSSSPPPASPHSSSPPR) are disordered. Residues 74 to 89 (SAPSPATTTAASSSSS) show a composition bias toward low complexity. The tract at residues 165-324 (VPPAPTSMVT…CRYCEKVFAL (160 aa)) is interaction with CBFA2T3. The segment at 210-232 (FPCPRCGKSFIHPKRLQTHEAQC) adopts a C2H2-type 1; atypical zinc-finger fold. Residues 234–255 (RGSNTRGSAGLGPGVSGSGGPA) are disordered. A compositionally biased stretch (gly residues) spans 242–255 (AGLGPGVSGSGGPA). 3 consecutive C2H2-type zinc fingers follow at residues 285–307 (YVCA…SNVH), 313–335 (YPCR…EVWH), and 341–364 (YQCI…RAFH). S367 carries the phosphoserine modification. Residues 404–578 (KTYSQGAPEA…QLQAPPPLCQ (175 aa)) are disordered. The segment covering 430–446 (SPQPLPPPAPEPGPPPS) has biased composition (pro residues). Residues 467 to 477 (AAGGGPAGTGG) show a composition bias toward gly residues. Low complexity-rich tracts occupy residues 478 to 488 (SQAASVITYTT) and 507 to 529 (ATPT…ATAT). Residue K548 forms a Glycyl lysine isopeptide (Lys-Gly) (interchain with G-Cter in SUMO2) linkage. A compositionally biased stretch (gly residues) spans 552-565 (GLSGSGGSPTGTGR). K590 is covalently cross-linked (Glycyl lysine isopeptide (Lys-Gly) (interchain with G-Cter in SUMO2)). The span at 591–600 (RRISETDLRP) shows a compositional bias: basic and acidic residues. Disordered stretches follow at residues 591 to 700 (RRIS…ERRH), 715 to 738 (LRKH…SSTR), 759 to 839 (QRHA…GGGS), and 854 to 880 (GGSR…GDRM). The segment covering 604 to 627 (SGEEVEESEEEEEEEEEEDQEEQE) has biased composition (acidic residues). Residues 628 to 637 (ESKAGGEDQL) show a composition bias toward basic and acidic residues. 2 C2H2-type zinc fingers span residues 700 to 722 (HRCG…QEAH) and 739 to 761 (FTCP…GQRH). 2 positions are modified to phosphothreonine; by HIPK2: T769 and T771. Residues 799–820 (SSSSGEAGSGSAAAAEASESAS) are compositionally biased toward low complexity. T953 carries the post-translational modification Phosphothreonine; by HIPK2.

Interacts with HIPK2. Interacts with CBFA2T3. Interacts with ZBTB38. Phosphorylated by HIPK2. This phosphorylation reduces stability and triggers ZBTB4 protein degradation in response to DNA damage. Expressed in adult and aged myogenic satellite cells.

It is found in the nucleus. Its subcellular location is the chromosome. In terms of biological role, transcriptional repressor with bimodal DNA-binding specificity. Represses transcription in a methyl-CpG-dependent manner. Binds with a higher affinity to methylated CpG dinucleotides in the consensus sequence 5'-CGCG-3' but can also bind to the non-methylated consensus sequence 5'-CTGCNA-3' also known as the consensus kaiso binding site (KBS). Can also bind specifically to a single methyl-CpG pair and can bind hemimethylated DNA but with a lower affinity compared to methylated DNA. Plays a role in postnatal myogenesis, may be involved in the regulation of satellite cells self-renewal. The chain is Zinc finger and BTB domain-containing protein 4 (Zbtb4) from Mus musculus (Mouse).